A 328-amino-acid chain; its full sequence is Malate dehydrogenase 1 (328 aa).

12-18 (GAAGQIG) provides a ligand contact to NAD(+). 2 residues coordinate substrate: Arg95 and Arg101. Residues Asn108, Gln115, and 132 to 134 (VGN) contribute to the NAD(+) site. Substrate is bound by residues Asn134 and Arg165. His190 (proton acceptor) is an active-site residue.

The protein belongs to the LDH/MDH superfamily. MDH type 2 family.

The enzyme catalyses (S)-malate + NAD(+) = oxaloacetate + NADH + H(+). In terms of biological role, catalyzes the reversible oxidation of malate to oxaloacetate. In Albidiferax ferrireducens (strain ATCC BAA-621 / DSM 15236 / T118) (Rhodoferax ferrireducens), this protein is Malate dehydrogenase 1.